A 160-amino-acid polypeptide reads, in one-letter code: SsrA-binding protein (160 aa).

Residues 133–160 (KKLHDKRETEKERDWNRQKSRLLKGNSQ) form a disordered region. Residues 137–149 (DKRETEKERDWNR) are compositionally biased toward basic and acidic residues.

It belongs to the SmpB family.

It is found in the cytoplasm. Required for rescue of stalled ribosomes mediated by trans-translation. Binds to transfer-messenger RNA (tmRNA), required for stable association of tmRNA with ribosomes. tmRNA and SmpB together mimic tRNA shape, replacing the anticodon stem-loop with SmpB. tmRNA is encoded by the ssrA gene; the 2 termini fold to resemble tRNA(Ala) and it encodes a 'tag peptide', a short internal open reading frame. During trans-translation Ala-aminoacylated tmRNA acts like a tRNA, entering the A-site of stalled ribosomes, displacing the stalled mRNA. The ribosome then switches to translate the ORF on the tmRNA; the nascent peptide is terminated with the 'tag peptide' encoded by the tmRNA and targeted for degradation. The ribosome is freed to recommence translation, which seems to be the essential function of trans-translation. This is SsrA-binding protein from Agrobacterium fabrum (strain C58 / ATCC 33970) (Agrobacterium tumefaciens (strain C58)).